We begin with the raw amino-acid sequence, 376 residues long: UDP-N-acetylenolpyruvoylglucosamine reductase (376 aa).

Positions 48-219 constitute an FAD-binding PCMH-type domain; that stretch reads VGGPARHLVI…LDVTMQFNLG (172 aa). Arginine 196 is an active-site residue. The active-site Proton donor is serine 274. Residue glutamate 368 is part of the active site.

Belongs to the MurB family. FAD is required as a cofactor.

The protein resides in the cytoplasm. It carries out the reaction UDP-N-acetyl-alpha-D-muramate + NADP(+) = UDP-N-acetyl-3-O-(1-carboxyvinyl)-alpha-D-glucosamine + NADPH + H(+). It functions in the pathway cell wall biogenesis; peptidoglycan biosynthesis. In terms of biological role, cell wall formation. In Cutibacterium acnes (strain DSM 16379 / KPA171202) (Propionibacterium acnes), this protein is UDP-N-acetylenolpyruvoylglucosamine reductase.